The following is a 463-amino-acid chain: Bifunctional protein GlmU (463 aa).

The tract at residues 1–233 (MSKKSTFIIL…NFEVMGINSR (233 aa)) is pyrophosphorylase. UDP-N-acetyl-alpha-D-glucosamine is bound by residues 10 to 13 (LAAG), Lys-24, Gln-76, 81 to 82 (GT), 104 to 106 (YGD), Gly-143, Glu-158, Asn-173, and Asn-231. Asp-106 provides a ligand contact to Mg(2+). Position 231 (Asn-231) interacts with Mg(2+). Residues 234-254 (YELFVAEQELKLRINKEHLSK) are linker. The N-acetyltransferase stretch occupies residues 255–463 (GVQIIDIYST…LRRKQMYENR (209 aa)). Residues Arg-336 and Lys-354 each contribute to the UDP-N-acetyl-alpha-D-glucosamine site. The active-site Proton acceptor is the His-366. Positions 369 and 380 each coordinate UDP-N-acetyl-alpha-D-glucosamine. Acetyl-CoA is bound by residues 389–390 (NY), Ala-426, and Arg-443.

The protein in the N-terminal section; belongs to the N-acetylglucosamine-1-phosphate uridyltransferase family. It in the C-terminal section; belongs to the transferase hexapeptide repeat family. As to quaternary structure, homotrimer. Mg(2+) serves as cofactor.

The protein localises to the cytoplasm. The enzyme catalyses alpha-D-glucosamine 1-phosphate + acetyl-CoA = N-acetyl-alpha-D-glucosamine 1-phosphate + CoA + H(+). It carries out the reaction N-acetyl-alpha-D-glucosamine 1-phosphate + UTP + H(+) = UDP-N-acetyl-alpha-D-glucosamine + diphosphate. It participates in nucleotide-sugar biosynthesis; UDP-N-acetyl-alpha-D-glucosamine biosynthesis; N-acetyl-alpha-D-glucosamine 1-phosphate from alpha-D-glucosamine 6-phosphate (route II): step 2/2. The protein operates within nucleotide-sugar biosynthesis; UDP-N-acetyl-alpha-D-glucosamine biosynthesis; UDP-N-acetyl-alpha-D-glucosamine from N-acetyl-alpha-D-glucosamine 1-phosphate: step 1/1. It functions in the pathway bacterial outer membrane biogenesis; LPS lipid A biosynthesis. Functionally, catalyzes the last two sequential reactions in the de novo biosynthetic pathway for UDP-N-acetylglucosamine (UDP-GlcNAc). The C-terminal domain catalyzes the transfer of acetyl group from acetyl coenzyme A to glucosamine-1-phosphate (GlcN-1-P) to produce N-acetylglucosamine-1-phosphate (GlcNAc-1-P), which is converted into UDP-GlcNAc by the transfer of uridine 5-monophosphate (from uridine 5-triphosphate), a reaction catalyzed by the N-terminal domain. This is Bifunctional protein GlmU from Caldicellulosiruptor saccharolyticus (strain ATCC 43494 / DSM 8903 / Tp8T 6331).